A 326-amino-acid polypeptide reads, in one-letter code: tRNA uridine(34) hydroxylase (326 aa).

The Rhodanese domain occupies 123 to 217; that stretch reads SDPDVLLVDT…YLEEVKQEES (95 aa). The Cysteine persulfide intermediate role is filled by cysteine 177. The disordered stretch occupies residues 304-326; that stretch reads VSQVILSRRTEKEDQRQAQNKKA.

This sequence belongs to the TrhO family.

It catalyses the reaction uridine(34) in tRNA + AH2 + O2 = 5-hydroxyuridine(34) in tRNA + A + H2O. Catalyzes oxygen-dependent 5-hydroxyuridine (ho5U) modification at position 34 in tRNAs. This chain is tRNA uridine(34) hydroxylase, found in Shewanella sediminis (strain HAW-EB3).